The sequence spans 374 residues: DNA replication and repair protein RecF (374 aa).

Residue 34–41 (GDNGAGKT) coordinates ATP.

This sequence belongs to the RecF family.

The protein resides in the cytoplasm. In terms of biological role, the RecF protein is involved in DNA metabolism; it is required for DNA replication and normal SOS inducibility. RecF binds preferentially to single-stranded, linear DNA. It also seems to bind ATP. This Rhizobium johnstonii (strain DSM 114642 / LMG 32736 / 3841) (Rhizobium leguminosarum bv. viciae) protein is DNA replication and repair protein RecF.